The chain runs to 729 residues: 1,4-alpha-glucan branching enzyme GlgB (729 aa).

The active-site Nucleophile is Asp409. Glu462 functions as the Proton donor in the catalytic mechanism.

The protein belongs to the glycosyl hydrolase 13 family. GlgB subfamily. As to quaternary structure, monomer.

The catalysed reaction is Transfers a segment of a (1-&gt;4)-alpha-D-glucan chain to a primary hydroxy group in a similar glucan chain.. It participates in glycan biosynthesis; glycogen biosynthesis. Functionally, catalyzes the formation of the alpha-1,6-glucosidic linkages in glycogen by scission of a 1,4-alpha-linked oligosaccharide from growing alpha-1,4-glucan chains and the subsequent attachment of the oligosaccharide to the alpha-1,6 position. The protein is 1,4-alpha-glucan branching enzyme GlgB of Saccharophagus degradans (strain 2-40 / ATCC 43961 / DSM 17024).